The sequence spans 476 residues: RNA-splicing ligase RtcB homolog (476 aa).

Residues aspartate 90, cysteine 93, histidine 198, histidine 230, and histidine 324 each contribute to the Mn(2+) site. 197-201 (NHYAE) is a GMP binding site. GMP is bound by residues 324–325 (HN), 373–376 (GGTM), serine 380, 399–402 (HGAG), and lysine 475. Residue histidine 399 is the GMP-histidine intermediate of the active site.

The protein belongs to the RtcB family. As to quaternary structure, catalytic component of the tRNA-splicing ligase complex. Mn(2+) serves as cofactor.

It catalyses the reaction a 3'-end 3'-phospho-ribonucleotide-RNA + a 5'-end dephospho-ribonucleoside-RNA + GTP = a ribonucleotidyl-ribonucleotide-RNA + GMP + diphosphate. The catalysed reaction is a 3'-end 2',3'-cyclophospho-ribonucleotide-RNA + a 5'-end dephospho-ribonucleoside-RNA + GTP + H2O = a ribonucleotidyl-ribonucleotide-RNA + GMP + diphosphate + H(+). Its function is as follows. Catalytic subunit of the tRNA-splicing ligase complex that acts by directly joining spliced tRNA halves to mature-sized tRNAs by incorporating the precursor-derived splice junction phosphate into the mature tRNA as a canonical 3',5'-phosphodiester. May act as an RNA ligase with broad substrate specificity, and may function toward other RNAs. The protein is RNA-splicing ligase RtcB homolog of Chlamydomonas reinhardtii (Chlamydomonas smithii).